We begin with the raw amino-acid sequence, 363 residues long: Anhydro-N-acetylmuramic acid kinase (363 aa).

10-17 is a binding site for ATP; sequence GTSLDGLD.

It belongs to the anhydro-N-acetylmuramic acid kinase family.

The catalysed reaction is 1,6-anhydro-N-acetyl-beta-muramate + ATP + H2O = N-acetyl-D-muramate 6-phosphate + ADP + H(+). Its pathway is amino-sugar metabolism; 1,6-anhydro-N-acetylmuramate degradation. The protein operates within cell wall biogenesis; peptidoglycan recycling. Its function is as follows. Catalyzes the specific phosphorylation of 1,6-anhydro-N-acetylmuramic acid (anhMurNAc) with the simultaneous cleavage of the 1,6-anhydro ring, generating MurNAc-6-P. Is required for the utilization of anhMurNAc either imported from the medium or derived from its own cell wall murein, and thus plays a role in cell wall recycling. Contributes to intrinsic fosfomycin resistance in P.putida. This is Anhydro-N-acetylmuramic acid kinase from Pseudomonas putida (strain ATCC 47054 / DSM 6125 / CFBP 8728 / NCIMB 11950 / KT2440).